Reading from the N-terminus, the 342-residue chain is uncharacterized protein (342 aa).

A MurNAc-LAA domain is found at 3–173 (IAIRGGHNFL…LIGYLIAKGI (171 aa)).

This sequence to C.perfringens CPE1502.

This is an uncharacterized protein from Clostridium perfringens.